The primary structure comprises 568 residues: Type 2 DNA topoisomerase 6 subunit B (568 aa).

Residues Asn-46, Asp-78, 99–100 (TK), 109–116 (GQQGIGIS), and Lys-473 each bind ATP.

The protein belongs to the TOP6B family. In terms of assembly, homodimer. Heterotetramer of two Top6A and two Top6B chains.

It catalyses the reaction ATP-dependent breakage, passage and rejoining of double-stranded DNA.. Relaxes both positive and negative superturns and exhibits a strong decatenase activity. This is Type 2 DNA topoisomerase 6 subunit B from Pyrococcus furiosus (strain ATCC 43587 / DSM 3638 / JCM 8422 / Vc1).